A 225-amino-acid polypeptide reads, in one-letter code: Agamous-like MADS-box protein TM6 (225 aa).

The region spanning 1 to 61 (MGRGKIEIKR…GKFHEYTSPT (61 aa)) is the MADS-box domain. In terms of domain architecture, K-box spans 84–174 (YERMQENLRK…LLNFEAKCDD (91 aa)).

Expressed during flower development in stamens, petals and carpels. Expressed in fruits and seeds.

Its subcellular location is the nucleus. Its function is as follows. Probable transcription factor involved in flower development. The polypeptide is Agamous-like MADS-box protein TM6 (Vitis vinifera (Grape)).